The following is a 445-amino-acid chain: Exodeoxyribonuclease 7 large subunit (445 aa).

Belongs to the XseA family. As to quaternary structure, heterooligomer composed of large and small subunits.

The protein resides in the cytoplasm. The enzyme catalyses Exonucleolytic cleavage in either 5'- to 3'- or 3'- to 5'-direction to yield nucleoside 5'-phosphates.. Functionally, bidirectionally degrades single-stranded DNA into large acid-insoluble oligonucleotides, which are then degraded further into small acid-soluble oligonucleotides. This Staphylococcus epidermidis (strain ATCC 35984 / DSM 28319 / BCRC 17069 / CCUG 31568 / BM 3577 / RP62A) protein is Exodeoxyribonuclease 7 large subunit.